Here is a 288-residue protein sequence, read N- to C-terminus: Threonine-rich protein (288 aa).

A signal peptide spans 1 to 20 (MKAFLLSLATLLACIVLTES). Residues 141-150 (TTVTPQTTDG) show a composition bias toward polar residues. The segment at 141–260 (TTVTPQTTDG…PAPTTTPAPT (120 aa)) is disordered. Residues 151–253 (NTTTEAPTST…TAAPTTTPAP (103 aa)) are compositionally biased toward low complexity.

Component of the acid-insoluble and acid-soluble organic matrix of the aragonitic skeleton (at protein level).

The protein localises to the secreted. The protein is Threonine-rich protein of Acropora millepora (Staghorn coral).